The primary structure comprises 125 residues: uncharacterized protein (125 aa).

This is an uncharacterized protein from Dictyostelium discoideum (Social amoeba).